A 1050-amino-acid chain; its full sequence is MSKFFIDRPIFAWVIALVIMLVGALSILKLPINQYPSIAPPAIAIAVTYPGASAQTVQDTVVQVIEQQLNGIDNLRYVSSESNSDGSMTITATFEQGTNPDTAQVQVQNKLNLATPLLPQEVQQQGIRVTKAVKNFLLVIGLVSEDGSMTKDDLANYIVSNMQDPISRTAGVGDFQVFGAQYAMRIWLDPAKLNKFQLTPVDVKTAVAAQNVQVSSGQLGGLPALPGTQLNATIIGKTRLQTAEQFESILLKVNKDGSQVRLGDVAQVGLGGENYAVSAQFNGKPASGLAVKLATGANALDTAKALRETIKGLEPFFPPGVKAVFPYDTTPVVTESISGVIHTLIEAVVLVFLVMYLFLQNFRATIITTMTVPVVLLGTFGILAAAGFSINTLTMFAMVLAIGLLVDDAIVVVENVERVMSEEGLPPKEATKRSMEQIQGALVGIALVLSAVLLPMAFFGGSTGVIYRQFSITIVSAMGLSVLVALIFTPALCATMLKPLKKGEHHTAKGGFFGWFNRNFDRSVNGYERSVGTILRNKVPFLLGYALIVVGMIWLFARIPTAFLPEEDQGVLFAQVQTPAGSSAERTQVVVDQMREYLLKDEADTVSSVFTVNGFNFAGRGQSSGMAFIMLKPWDERSKENSVFALAQRAQQHFFTFRDAMVFAFAPPAVLELGNATGFDVFLQDRGGVGHAKLMEARNQFLAKAAQSKILSAVRPNGLNDEPQYQLTIDDERASALGVTIADINNTLSIALGASYVNDFIDRGRVKKVYIQGEPSARMSPEDLQKWYVRNGAGEMVPFSSFAKGEWTYGSPKLSRYNGVEAMEILGAPAPGYSTGEAMAEVERIAGELPSGIGFSWTGMSYEEKLSGSQMPALFALSVLFVFLCLAALYESWSIPIAVVLVVPLGIIGALIATSLRGLSNDVYFLVGLLTTIGLAAKNAILIVEFAKELHEQGRSLYDAAIEACRMRLRPIIMTSLAFILGVVPLTIASGAGAGSQHAIGTGVIGGMISATVLAIFWVPLFFVAVSSLFGSKEPEKDVTPENPRYEAGQ.

Helical transmembrane passes span 10–30 (IFAW…ILKL), 339–359 (GVIH…YLFL), 370–390 (MTVP…GFSI), 393–413 (LTMF…IVVV), 440–460 (GALV…AFFG), 472–492 (ITIV…TPAL), 539–559 (VPFL…FARI), 871–891 (MPAL…ALYE), 893–913 (WSIP…ALIA), 923–943 (VYFL…AILI), 972–992 (IIMT…ASGA), and 1004–1024 (VIGG…LFFV).

It belongs to the resistance-nodulation-cell division (RND) (TC 2.A.6) family.

It localises to the cell inner membrane. In terms of biological role, the inner membrane transporter component of an antibiotic efflux pump. Confers resistance to numerous structurally unrelated antibiotics such as carbenicillin, chloramphenicol, erythromycin, novobiocin, streptomycin and tetracycline. Is not involved in organic solvent efflux. The sequence is that of Antibiotic efflux pump membrane transporter ArpB (arpB) from Pseudomonas putida (Arthrobacter siderocapsulatus).